Reading from the N-terminus, the 455-residue chain is MKLKAIILAAGAGTRMKSKLPKVLHKVCGRTMLNHVIDVAKGSMVQECIVVVGHGAEDVKESLTPDVKTVLQKEQLGTGHALMMAEPYIDDGTILVLCGDGPLITEETLNRTVAYHREGNFKATVLTTDLANPKGLGRIVRNAEGQLEKIVEEKDATEEEKAIIEVNSGIYCFDGEILKEALPKLKNENAQKEYYLTDILSIIRNMGFGVGVYKLEEYEEIMAVNSREQLADVEAIMRRRIAKKHMANGVTIMNPEHVYIEKTVTIGADTILYPGVILTGNTVIGEDCIIGQNSRIEDTIIGDGVEVQSSTIIHSKVGNFTHIGPYAYLRPNSNIGEHVKIGDFVEVKNSNIGDHSKASHLAYIGDADVGQNVNIGCGVVFVNYDGKNKHRTTVEDNSFVGSNSNLIAPVTVKESGYVACGSTITKDVPEGSLAVARARQENKEGWTKRKGLLKK.

Residues 1–227 (MKLKAIILAA…YEEIMAVNSR (227 aa)) form a pyrophosphorylase region. UDP-N-acetyl-alpha-D-glucosamine contacts are provided by residues 8-11 (LAAG), Lys-22, Gln-72, and 77-78 (GT). Mg(2+) is bound at residue Asp-100. Residues Gly-137, Glu-152, Asn-167, and Asn-225 each coordinate UDP-N-acetyl-alpha-D-glucosamine. Asn-225 serves as a coordination point for Mg(2+). The linker stretch occupies residues 228 to 248 (EQLADVEAIMRRRIAKKHMAN). The segment at 249 to 455 (GVTIMNPEHV…WTKRKGLLKK (207 aa)) is N-acetyltransferase. Residues Arg-330 and Lys-348 each contribute to the UDP-N-acetyl-alpha-D-glucosamine site. The Proton acceptor role is filled by His-360. Positions 363 and 374 each coordinate UDP-N-acetyl-alpha-D-glucosamine. Acetyl-CoA is bound by residues 383-384 (NY), Ser-402, Cys-420, and Arg-437.

This sequence in the N-terminal section; belongs to the N-acetylglucosamine-1-phosphate uridyltransferase family. The protein in the C-terminal section; belongs to the transferase hexapeptide repeat family. Homotrimer. Requires Mg(2+) as cofactor.

It is found in the cytoplasm. The catalysed reaction is alpha-D-glucosamine 1-phosphate + acetyl-CoA = N-acetyl-alpha-D-glucosamine 1-phosphate + CoA + H(+). It catalyses the reaction N-acetyl-alpha-D-glucosamine 1-phosphate + UTP + H(+) = UDP-N-acetyl-alpha-D-glucosamine + diphosphate. Its pathway is nucleotide-sugar biosynthesis; UDP-N-acetyl-alpha-D-glucosamine biosynthesis; N-acetyl-alpha-D-glucosamine 1-phosphate from alpha-D-glucosamine 6-phosphate (route II): step 2/2. It participates in nucleotide-sugar biosynthesis; UDP-N-acetyl-alpha-D-glucosamine biosynthesis; UDP-N-acetyl-alpha-D-glucosamine from N-acetyl-alpha-D-glucosamine 1-phosphate: step 1/1. It functions in the pathway bacterial outer membrane biogenesis; LPS lipid A biosynthesis. Functionally, catalyzes the last two sequential reactions in the de novo biosynthetic pathway for UDP-N-acetylglucosamine (UDP-GlcNAc). The C-terminal domain catalyzes the transfer of acetyl group from acetyl coenzyme A to glucosamine-1-phosphate (GlcN-1-P) to produce N-acetylglucosamine-1-phosphate (GlcNAc-1-P), which is converted into UDP-GlcNAc by the transfer of uridine 5-monophosphate (from uridine 5-triphosphate), a reaction catalyzed by the N-terminal domain. The chain is Bifunctional protein GlmU from Alkaliphilus oremlandii (strain OhILAs) (Clostridium oremlandii (strain OhILAs)).